The primary structure comprises 360 residues: Histidinol-phosphate aminotransferase (360 aa).

Lys-219 is subject to N6-(pyridoxal phosphate)lysine.

It belongs to the class-II pyridoxal-phosphate-dependent aminotransferase family. Histidinol-phosphate aminotransferase subfamily. In terms of assembly, homodimer. Requires pyridoxal 5'-phosphate as cofactor.

It carries out the reaction L-histidinol phosphate + 2-oxoglutarate = 3-(imidazol-4-yl)-2-oxopropyl phosphate + L-glutamate. Its pathway is amino-acid biosynthesis; L-histidine biosynthesis; L-histidine from 5-phospho-alpha-D-ribose 1-diphosphate: step 7/9. The sequence is that of Histidinol-phosphate aminotransferase from Jannaschia sp. (strain CCS1).